We begin with the raw amino-acid sequence, 269 residues long: Hydroxyethylthiazole kinase (269 aa).

Methionine 46 is a binding site for substrate. Positions 122 and 168 each coordinate ATP. Glycine 195 serves as a coordination point for substrate.

This sequence belongs to the Thz kinase family. It depends on Mg(2+) as a cofactor.

It catalyses the reaction 5-(2-hydroxyethyl)-4-methylthiazole + ATP = 4-methyl-5-(2-phosphooxyethyl)-thiazole + ADP + H(+). Its pathway is cofactor biosynthesis; thiamine diphosphate biosynthesis; 4-methyl-5-(2-phosphoethyl)-thiazole from 5-(2-hydroxyethyl)-4-methylthiazole: step 1/1. Catalyzes the phosphorylation of the hydroxyl group of 4-methyl-5-beta-hydroxyethylthiazole (THZ). This chain is Hydroxyethylthiazole kinase, found in Chloroflexus aurantiacus (strain ATCC 29366 / DSM 635 / J-10-fl).